A 254-amino-acid chain; its full sequence is Phosphate import ATP-binding protein PstB (254 aa).

The ABC transporter domain maps to 9-249 (MSVKDLDLFY…PVDKRTEDYI (241 aa)). 41–48 (GPSGCGKS) is an ATP binding site.

This sequence belongs to the ABC transporter superfamily. Phosphate importer (TC 3.A.1.7) family. The complex is composed of two ATP-binding proteins (PstB), two transmembrane proteins (PstC and PstA) and a solute-binding protein (PstS).

The protein resides in the cell membrane. The catalysed reaction is phosphate(out) + ATP + H2O = ADP + 2 phosphate(in) + H(+). Part of the ABC transporter complex PstSACB involved in phosphate import. Responsible for energy coupling to the transport system. In Clostridioides difficile (strain 630) (Peptoclostridium difficile), this protein is Phosphate import ATP-binding protein PstB.